The following is a 102-amino-acid chain: C-X-C motif chemokine 10 (102 aa).

A signal peptide spans 1–19 (MNKSGFLIFCLILLTLSQG). Arg24 is subject to Citrulline. 2 disulfides stabilise this stretch: Cys28–Cys55 and Cys30–Cys72.

This sequence belongs to the intercrine alpha (chemokine CxC) family. Monomer, dimer, and tetramer. Interacts with CXCR3 (via N-terminus).

Its subcellular location is the secreted. In terms of biological role, pro-inflammatory cytokine that is involved in a wide variety of processes such as chemotaxis, differentiation, and activation of peripheral immune cells, regulation of cell growth, apoptosis and modulation of angiostatic effects. Plays thereby an important role during viral infections by stimulating the activation and migration of immune cells to the infected sites. Mechanistically, binding of CXCL10 to the CXCR3 receptor activates G protein-mediated signaling and results in downstream activation of phospholipase C-dependent pathway, an increase in intracellular calcium production and actin reorganization. In turn, recruitment of activated Th1 lymphocytes occurs at sites of inflammation. Activation of the CXCL10/CXCR3 axis also plays an important role in neurons in response to brain injury for activating microglia, the resident macrophage population of the central nervous system, and directing them to the lesion site. This recruitment is an essential element for neuronal reorganization. The chain is C-X-C motif chemokine 10 (CXCL10) from Bos taurus (Bovine).